A 208-amino-acid polypeptide reads, in one-letter code: Platelet-activating factor receptor (208 aa).

Residues 1 to 16 (MEPHDSSHVDSEFRYT) lie on the Extracellular side of the membrane. A helical transmembrane segment spans residues 17–38 (LFPIVYSIIFVLGVIANGYVLW). The Cytoplasmic portion of the chain corresponds to 39–54 (VFARLYPSKKFNEIKI). The chain crosses the membrane as a helical span at residues 55–74 (FMVNLTMADMLFLITLPLWI). The Extracellular segment spans residues 75–91 (VYYQNGGNWIFPKFLCN). A disulfide bridge links Cys90 with Cys173. A helical membrane pass occupies residues 92-113 (LAGCLFFINTYCSVAFLGVITY). The Cytoplasmic segment spans residues 114-133 (NRFQAVTRPIKTAQANTRKR). Residues 134 to 155 (GISLSLVIWVAIVGAASYFFIL) traverse the membrane as a helical segment. The Extracellular portion of the chain corresponds to 156 to 184 (DSTNTVPNSAGSGNITRCFEHYEKGSVPV). Residue Asn169 is glycosylated (N-linked (GlcNAc...) asparagine). A helical transmembrane segment spans residues 185-205 (LIIHIFIVFSFFLVFLIILFC). At 206–208 (NLV) the chain is on the cytoplasmic side.

The protein belongs to the G-protein coupled receptor 1 family. Interacts with ARRB1.

The protein resides in the cell membrane. Functionally, receptor for platelet activating factor, a chemotactic phospholipid mediator that possesses potent inflammatory, smooth-muscle contractile and hypotensive activity. Seems to mediate its action via a G protein that activates a phosphatidylinositol-calcium second messenger system. This is Platelet-activating factor receptor (PTAFR) from Macaca mulatta (Rhesus macaque).